The primary structure comprises 308 residues: Porphobilinogen deaminase (308 aa).

Position 240 is an S-(dipyrrolylmethanemethyl)cysteine (Cys-240).

The protein belongs to the HMBS family. As to quaternary structure, monomer. Dipyrromethane serves as cofactor.

The enzyme catalyses 4 porphobilinogen + H2O = hydroxymethylbilane + 4 NH4(+). It participates in porphyrin-containing compound metabolism; protoporphyrin-IX biosynthesis; coproporphyrinogen-III from 5-aminolevulinate: step 2/4. In terms of biological role, tetrapolymerization of the monopyrrole PBG into the hydroxymethylbilane pre-uroporphyrinogen in several discrete steps. This chain is Porphobilinogen deaminase, found in Campylobacter lari (strain RM2100 / D67 / ATCC BAA-1060).